The primary structure comprises 236 residues: Small ribosomal subunit protein eS6 (236 aa).

2 positions are modified to phosphoserine: serine 232 and serine 233.

It belongs to the eukaryotic ribosomal protein eS6 family. Phosphorylated.

The sequence is that of Small ribosomal subunit protein eS6 (RPS6) from Eremothecium gossypii (strain ATCC 10895 / CBS 109.51 / FGSC 9923 / NRRL Y-1056) (Yeast).